Consider the following 416-residue polypeptide: S-layer protein B (416 aa).

An N-terminal signal peptide occupies residues 1–20 (MKYNLLPLILLSLLVAPLLA). The stretch at 310–330 (IASLNSTIQSLESQISSLSST) forms a coiled coil. The chain crosses the membrane as a helical span at residues 392–412 (IALAVSIIAIIISIVVLILVF).

The protein belongs to the Sulfolobales SlaB family. As to quaternary structure, the mushroom-shaped unit cells of the Sulfolobales' S-layers may consist of three SlaB subunits and six SlaA subunits.

The protein localises to the secreted. It localises to the cell wall. The protein resides in the S-layer. It is found in the cell membrane. S-layer small protein. May anchor the complex to the cell membrane. This chain is S-layer protein B, found in Metallosphaera sedula (strain ATCC 51363 / DSM 5348 / JCM 9185 / NBRC 15509 / TH2).